The sequence spans 262 residues: MGANIRYSNDYALSLASKNGHIKVVKYLVSKDANVTHDNNYAVRYASENGHFEVVKYLVDQGADIRDCRDYAVRFASENGHLEVVKYLVDKGANIRALDDYAVCLASVNGYIEIVKYLVSQGANFRADNDYAVRFASENGYLEVVKFLVDQGADIRADDDYAIISASVYGHLEVIKFLMSQGADFRSKNNASIKLAIKYKHPEIIEYFLTQCTDVNTDIINIFYAYLTKLASKNKTAKLVEYMNIFCHIINKYDNCVKHLMP.

ANK repeat units lie at residues 8 to 37 (SNDYALSLASKNGHIKVVKYLVSKDANVTH), 38 to 67 (DNNYAVRYASENGHFEVVKYLVDQGADIRD), 68 to 97 (CRDYAVRFASENGHLEVVKYLVDKGANIRA), 99 to 127 (DDYAVCLASVNGYIEIVKYLVSQGANFRA), 128 to 157 (DNDYAVRFASENGYLEVVKFLVDQGADIRA), 159 to 187 (DDYAIISASVYGHLEVIKFLMSQGADFRS), and 189 to 217 (NNASIKLAIKYKHPEIIEYFLTQCTDVNT).

The protein is Putative ankyrin repeat protein R848 of Acanthamoeba polyphaga (Amoeba).